The chain runs to 1744 residues: Transcription initiation factor TFIID subunit 1 (1744 aa).

Disordered stretches follow at residues 1-65 (MNNT…EKNE), 248-275 (VSIR…APNS), 429-488 (PEDR…DNDP), 1001-1024 (QNQT…DSDN), 1071-1098 (TTNQ…SQFG), and 1186-1213 (MKKN…PPNP). Over residues 43–52 (ACSSASNGGS) the composition is skewed to polar residues. Over residues 55–64 (VKMEPKVEKN) the composition is skewed to basic and acidic residues. Over residues 429–439 (PEDRRHDEGPD) the composition is skewed to basic and acidic residues. A compositionally biased stretch (basic residues) spans 440–449 (HHHHHHHHRK). A compositionally biased stretch (polar residues) spans 477–488 (ESTMAQFTDNDP). The segment covering 1012–1024 (STDDDSTDADSDN) has biased composition (acidic residues). 3 coiled-coil regions span residues 1019–1080 (DADS…KGEK), 1161–1204 (YAQM…TEKK), and 1282–1314 (NFAE…RQMA). 2 stretches are compositionally biased toward basic and acidic residues: residues 1076 to 1093 (EKGE…EKKS) and 1186 to 1205 (MKKN…EKKV). The segment covering 1319 to 1344 (YGGGASSSGGAGGGGSGIGGSTGGGI) has biased composition (gly residues). Residues 1319 to 1391 (YGGGASSSGG…SKRRSSMMPE (73 aa)) form a disordered region. A compositionally biased stretch (polar residues) spans 1354–1363 (SQISGTSSFL). Over residues 1372 to 1381 (GGNRNSSVSG) the composition is skewed to low complexity. Positions 1379 to 1386 (VSGSKRRS) match the Nuclear localization signal motif. Bromo domains follow at residues 1404–1512 (RARA…MIER) and 1537–1634 (YLLG…VKDQ). The segment covering 1666–1694 (DHMDEMEDHPTEEEEEDDDDEIMDDDMDI) has biased composition (acidic residues). Disordered regions lie at residues 1666-1702 (DHMD…YSYD) and 1714-1744 (NDLA…LDSF).

Belongs to the TAF1 family. As to quaternary structure, component of the TFIID basal transcription factor complex, composed of TATA-box-binding protein tbp-1, and a number of TBP-associated factors (TAFs).

The protein localises to the nucleus. The TFIID basal transcription factor complex plays a major role in the initiation of RNA polymerase II (Pol II)-dependent transcription. TFIID recognizes and binds promoters via its subunit tbp-1, a TATA-box-binding protein, and promotes assembly of the pre-initiation complex (PIC). The TFIID complex consists of tbp-1 and TBP-associated factors (TAFs), including taf-1. May regulate RNA polymerase II activity and thereby may control transcription initiation by RNA polymerase II. Required for early embryonic development. Essential for embryonic transcription of several genes. The polypeptide is Transcription initiation factor TFIID subunit 1 (Caenorhabditis elegans).